Reading from the N-terminus, the 111-residue chain is UPF0060 membrane protein Pden_1837 (111 aa).

The next 4 membrane-spanning stretches (helical) occupy residues 7–27 (IAVY…FWAW), 30–50 (LGKS…FAWL), 62–82 (AYAA…WLTE), and 91–111 (ILGG…PRAA).

It belongs to the UPF0060 family.

It is found in the cell inner membrane. The chain is UPF0060 membrane protein Pden_1837 from Paracoccus denitrificans (strain Pd 1222).